The primary structure comprises 45 residues: Large ribosomal subunit protein bL34 (45 aa).

It belongs to the bacterial ribosomal protein bL34 family.

The sequence is that of Large ribosomal subunit protein bL34 from Kineococcus radiotolerans (strain ATCC BAA-149 / DSM 14245 / SRS30216).